Reading from the N-terminus, the 35-residue chain is 30 kDa neutral phosphatase (35 aa).

Residues 1-28 show a composition bias toward polar residues; that stretch reads KSSAEVQQTQQASIPASQKANLGNQNNI. Positions 1 to 35 are disordered; sequence KSSAEVQQTQQASIPASQKANLGNQNNIMXVAXYQ.

Its function is as follows. Highly cationic enzyme that can bind human or rat immunoglobulins as well as serum albumin, and could therefore be involved in post-infectious sequelae. The sequence is that of 30 kDa neutral phosphatase from Staphylococcus aureus.